The primary structure comprises 160 residues: Nucleotide-binding protein VC_1508 (160 aa).

Belongs to the YajQ family.

In terms of biological role, nucleotide-binding protein. This chain is Nucleotide-binding protein VC_1508, found in Vibrio cholerae serotype O1 (strain ATCC 39315 / El Tor Inaba N16961).